The chain runs to 630 residues: tRNA uridine 5-carboxymethylaminomethyl modification enzyme MnmG (630 aa).

An FAD-binding site is contributed by 13–18; the sequence is GGGHAG. 273 to 287 contacts NAD(+); that stretch reads GPRYCPSIEDKVMRF.

This sequence belongs to the MnmG family. Homodimer. Heterotetramer of two MnmE and two MnmG subunits. FAD is required as a cofactor.

The protein localises to the cytoplasm. NAD-binding protein involved in the addition of a carboxymethylaminomethyl (cmnm) group at the wobble position (U34) of certain tRNAs, forming tRNA-cmnm(5)s(2)U34. The protein is tRNA uridine 5-carboxymethylaminomethyl modification enzyme MnmG of Actinobacillus pleuropneumoniae serotype 7 (strain AP76).